We begin with the raw amino-acid sequence, 63 residues long: Venom peptide U-reduvitoxin-Pp19 (63 aa).

Positions 1 to 23 (MSPYSILFVVVIALCLLPESIVG) are cleaved as a signal peptide. 3 disulfide bridges follow: Cys15–Cys62, Cys25–Cys53, and Cys30–Cys61.

As to expression, hemolymph (at protein level). Also weakly expressed by the venom gland (at protein level).

The protein localises to the secreted. Toxin with insecticidal activity. High doses of recombinant toxin causes impaired motor behavior of D.melanogaster, which progress slowly to paralysis and death after several hours. The chain is Venom peptide U-reduvitoxin-Pp19 from Pristhesancus plagipennis (Common assassin bug).